Reading from the N-terminus, the 457-residue chain is Methylenetetrahydrofolate--tRNA-(uracil-5-)-methyltransferase TrmFO (457 aa).

FAD is bound at residue 8-13 (GGGLAG).

This sequence belongs to the MnmG family. TrmFO subfamily. FAD serves as cofactor.

The protein localises to the cytoplasm. It catalyses the reaction uridine(54) in tRNA + (6R)-5,10-methylene-5,6,7,8-tetrahydrofolate + NADH + H(+) = 5-methyluridine(54) in tRNA + (6S)-5,6,7,8-tetrahydrofolate + NAD(+). The catalysed reaction is uridine(54) in tRNA + (6R)-5,10-methylene-5,6,7,8-tetrahydrofolate + NADPH + H(+) = 5-methyluridine(54) in tRNA + (6S)-5,6,7,8-tetrahydrofolate + NADP(+). Its function is as follows. Catalyzes the folate-dependent formation of 5-methyl-uridine at position 54 (M-5-U54) in all tRNAs. This Thermosynechococcus vestitus (strain NIES-2133 / IAM M-273 / BP-1) protein is Methylenetetrahydrofolate--tRNA-(uracil-5-)-methyltransferase TrmFO.